The following is a 937-amino-acid chain: Protocadherin alpha-7 (937 aa).

Positions 1 to 29 (MVCPNGYDPGGRHLLLFIIILAAWEAGRG) are cleaved as a signal peptide. Cadherin domains lie at 30–133 (QLHY…PPVF), 134–242 (PATQ…APVF), 243–350 (DRTL…APQL), 351–455 (TLTS…APAF), 456–565 (AQPE…APAL), and 581–678 (VPRS…APKA). At 30–697 (QLHYSVPEEA…GPETELVDVN (668 aa)) the chain is on the extracellular side. C96 and C102 are joined by a disulfide. N-linked (GlcNAc...) asparagine glycosylation is found at N254 and N265. N548 carries an N-linked (GlcNAc...) asparagine glycan. The chain crosses the membrane as a helical span at residues 698–718 (VYLIIAICAVSSLLVLTLLLY). At 719 to 937 (TALRCSAPSS…GNSTTDNSDQ (219 aa)) the chain is on the cytoplasmic side. Disordered regions lie at residues 756-795 (QRVC…DWRY) and 817-843 (AGPG…EVSP). PXXP repeat units lie at residues 774–777 (PSLP), 786–789 (PRQP), 819–822 (PGGP), 860–863 (PGNP), and 878–881 (PGSP). Positions 774–881 (PSLPQGPSST…PDKFIIPGSP (108 aa)) are 5 X 4 AA repeats of P-X-X-P. The span at 775 to 787 (SLPQGPSSTDNPR) shows a compositional bias: polar residues. A disordered region spans residues 888–937 (QEPANSQIDKSDFITFGKKEETKKKKKKKKGNKTQEKKEKGNSTTDNSDQ). Residues 896–910 (DKSDFITFGKKEETK) are compositionally biased toward basic and acidic residues.

Forms homodimers in trans (molecules expressed by two different cells). Forms promiscuous heterodimers in cis (at the plasma membrane of the same cell) with other protocadherins.

The protein resides in the cell membrane. Calcium-dependent cell-adhesion protein involved in cells self-recognition and non-self discrimination. Thereby, it is involved in the establishment and maintenance of specific neuronal connections in the brain. The sequence is that of Protocadherin alpha-7 from Pan troglodytes (Chimpanzee).